We begin with the raw amino-acid sequence, 347 residues long: Eukaryotic translation initiation factor 3 subunit I (347 aa).

WD repeat units follow at residues 8–47, 50–89, 149–190, 194–233, and 291–330; these read GHER…RLGT, GHTG…CVAT, THEG…EYVD, LHEK…VLKK, and GHFG…FDFK. The residue at position 302 (S302) is a Phosphoserine.

This sequence belongs to the eIF-3 subunit I family. As to quaternary structure, component of the eukaryotic translation initiation factor 3 (eIF-3) complex.

It localises to the cytoplasm. Functionally, component of the eukaryotic translation initiation factor 3 (eIF-3) complex, which is involved in protein synthesis of a specialized repertoire of mRNAs and, together with other initiation factors, stimulates binding of mRNA and methionyl-tRNAi to the 40S ribosome. The eIF-3 complex specifically targets and initiates translation of a subset of mRNAs involved in cell proliferation. The protein is Eukaryotic translation initiation factor 3 subunit I of Saccharomyces cerevisiae (strain YJM789) (Baker's yeast).